Consider the following 414-residue polypeptide: MTTAAGLSGIDLTDLDNFADGFPHHLFAIHRREAPVYWHRPTEHTPDGEGFWSVATYAETLEVLRDPVTYSSVTGGQRRFGGTVLQDLPVAGQVLNMMDDPRHTRIRRLVSSGLTPRMIRRVEDDLRRRARGLLDGVEPGAPFDFVVEIAAELPMQMICILLGVPETDRHWLFEAVEPGFDFRGSRRATMPRLNVEDAGSRLYTYALELIAGKRAEPADDMLSVVANATIDDPDAPALSDAELYLFFHLLFSAGAETTRNSIAGGLLALAENPDQLQTLRSDFELLPTAIEEIVRWTSPSPSKRRTASRAVSLGGQPIEAGQKVVVWEGSANRDPSVFDRADEFDITRKPNPHLGFGQGVHYCLGANLARLELRVLFEELLSRFGSVRVVEPAEWTRSNRHTGIRHLVVELRGG.

Residue cysteine 363 coordinates heme.

It belongs to the cytochrome P450 family. It depends on heme as a cofactor.

In Mycobacterium tuberculosis (strain CDC 1551 / Oshkosh), this protein is Putative cytochrome P450 126 (cyp126).